We begin with the raw amino-acid sequence, 95 residues long: MCYTLGFVTGVLFLLFDRSPFVRFHAVQSTLTFSTITALVILLPVLPGGALLSRVVMAFSIILWAFCIVKASRGEAFKLPIFGDIAEEQLSLNYT.

The next 3 membrane-spanning stretches (helical) occupy residues 2–22 (CYTLGFVTGVLFLLFDRSPFV), 32–52 (TFSTITALVILLPVLPGGALL), and 55–75 (VVMAFSIILWAFCIVKASRGE).

Belongs to the UPF0132 family.

It localises to the cell membrane. The protein is UPF0132 membrane protein AF_0736 of Archaeoglobus fulgidus (strain ATCC 49558 / DSM 4304 / JCM 9628 / NBRC 100126 / VC-16).